The following is a 126-amino-acid chain: Fatty acid-binding protein, liver (126 aa).

Alanine 2 carries the N-acetylalanine modification. Cholate is bound by residues lysine 77, histidine 99, and glutamine 101.

Belongs to the calycin superfamily. Fatty-acid binding protein (FABP) family.

Its subcellular location is the cytoplasm. Binds free fatty acids and their coenzyme A derivatives, bilirubin, and some other small molecules in the cytoplasm. May be involved in intracellular lipid transport. This Aquarana catesbeiana (American bullfrog) protein is Fatty acid-binding protein, liver (fabp1).